The following is a 725-amino-acid chain: A-agglutinin anchorage subunit (725 aa).

A signal peptide spans 1-24; it reads MTLSFAHFTYLFTILLGLTNIALA. 19 tandem repeats follow at residues 53–149, 182–188, 189–195, 196–202, 203–209, 210–216, 217–223, 224–230, 231–237, 238–244, 245–251, 252–258, 259–265, 266–272, 273–279, 280–286, 287–293, 294–300, and 301–307. The interval 53-493 is 2 X approximate repeats; that stretch reads VSTSTIVQAG…TSHSYSSVQT (441 aa). Disordered stretches follow at residues 168-318 and 335-363; these read PVTS…TSIS and SSTSVSLYSPSTPVYSVPSTSSNVATPSM. Residues 182 to 307 form an 18 X approximate tandem repeats, Ser/Thr-rich region; that stretch reads TTTSLSSTST…PSLTSSSPTL (126 aa). Residues 395-493 form a 1-2 repeat; that stretch reads MSTYFTTVSG…TSHSYSSVQT (99 aa). Gly-699 is lipidated: GPI-anchor amidated glycine. Positions 700 to 725 are cleaved as a propeptide — removed in mature form; the sequence is SGSQTRLPLGKLVFAIMAVACNVIFS.

As to quaternary structure, heterodimer; disulfide-linked. In terms of processing, extensively O-glycosylated by PMT1 and PMT2. Post-translationally, the GPI-anchor is attached to the protein in the endoplasmic reticulum and serves to target the protein to the cell surface. There, the glucosamine-inositol phospholipid moiety is cleaved off and the GPI-modified mannoprotein is covalently attached via its lipidless GPI glycan remnant to the 1,6-beta-glucan of the outer cell wall layer.

Its subcellular location is the secreted. The protein resides in the cell wall. The protein localises to the membrane. In terms of biological role, cell wall anchoring subunit of the a-agglutinin heterodimer. S.cerevisiae a and alpha cells express the complementary cell surface glycoproteins a-agglutinin and alpha-agglutinin, respectively, which interact with one another to promote cellular aggregation during mating. In Saccharomyces cerevisiae (strain ATCC 204508 / S288c) (Baker's yeast), this protein is A-agglutinin anchorage subunit (AGA1).